Consider the following 421-residue polypeptide: Cytochrome c biogenesis protein Ccs1 (421 aa).

The next 3 helical transmembrane spans lie at 12–32 (LRFA…GTVI), 71–91 (TWWF…CTLL), and 157–177 (IAPI…IIGS).

This sequence belongs to the Ccs1/CcsB family. As to quaternary structure, may interact with CcsA.

The protein localises to the plastid. It is found in the chloroplast thylakoid membrane. Its function is as follows. Required during biogenesis of c-type cytochromes (cytochrome c6 and cytochrome f) at the step of heme attachment. The chain is Cytochrome c biogenesis protein Ccs1 from Thalassiosira pseudonana (Marine diatom).